The sequence spans 199 residues: Cytochrome c oxidase assembly protein CtaG (199 aa).

Over 1-12 (MTNTPQTPPKER) the chain is Cytoplasmic. Residues 13–35 (ANGVIVGACLAFVAGMVGMAYAA) form a helical; Signal-anchor for type II membrane protein membrane-spanning segment. Topologically, residues 36-199 (VPLYDMFCRV…VKDGETENRL (164 aa)) are periplasmic.

This sequence belongs to the COX11/CtaG family.

The protein resides in the cell inner membrane. Its function is as follows. Exerts its effect at some terminal stage of cytochrome c oxidase synthesis, probably by being involved in the insertion of the copper B into subunit I. This is Cytochrome c oxidase assembly protein CtaG from Sinorhizobium fredii (strain NBRC 101917 / NGR234).